We begin with the raw amino-acid sequence, 560 residues long: Putative transport protein VFMJ11_0927 (560 aa).

The next 5 membrane-spanning stretches (helical) occupy residues 8–28 (LLSQ…LFIA), 37–57 (LGSS…GYTF), 66–86 (FMLF…GIFL), 94–114 (LLVL…GHYF), and 161–181 (NLSV…ILLA). 2 RCK C-terminal domains span residues 203–292 (RGIG…FRNG) and 293–376 (KEVF…KIGF). The next 5 helical transmembrane spans lie at 386–406 (LLAF…TMSF), 409–429 (VTFG…LGFL), 451–471 (GLLV…NEYF), 478–498 (VLAA…LVGA), and 539–559 (AGTY…MILL).

It belongs to the AAE transporter (TC 2.A.81) family. YbjL subfamily.

It is found in the cell membrane. The sequence is that of Putative transport protein VFMJ11_0927 from Aliivibrio fischeri (strain MJ11) (Vibrio fischeri).